Consider the following 497-residue polypeptide: Glycerol kinase (497 aa).

Residue Thr13 coordinates ADP. The ATP site is built by Thr13, Thr14, and Ser15. Position 13 (Thr13) interacts with sn-glycerol 3-phosphate. Arg17 provides a ligand contact to ADP. Sn-glycerol 3-phosphate is bound by residues Arg83, Glu84, and Tyr135. Arg83, Glu84, and Tyr135 together coordinate glycerol. His231 bears the Phosphohistidine; by HPr mark. Asp245 contributes to the sn-glycerol 3-phosphate binding site. Residues Asp245 and Gln246 each contribute to the glycerol site. Residues Thr267 and Gly310 each coordinate ADP. The ATP site is built by Thr267, Gly310, Gln314, and Gly411. Residues Gly411 and Asn415 each coordinate ADP.

Belongs to the FGGY kinase family. Homotetramer and homodimer (in equilibrium). Post-translationally, the phosphoenolpyruvate-dependent sugar phosphotransferase system (PTS), including enzyme I, and histidine-containing protein (HPr) are required for the phosphorylation, which leads to the activation of the enzyme.

The catalysed reaction is glycerol + ATP = sn-glycerol 3-phosphate + ADP + H(+). It functions in the pathway polyol metabolism; glycerol degradation via glycerol kinase pathway; sn-glycerol 3-phosphate from glycerol: step 1/1. With respect to regulation, activated by phosphorylation and inhibited by fructose 1,6-bisphosphate (FBP). Key enzyme in the regulation of glycerol uptake and metabolism. Catalyzes the phosphorylation of glycerol to yield sn-glycerol 3-phosphate. This chain is Glycerol kinase, found in Listeria monocytogenes serovar 1/2a (strain ATCC BAA-679 / EGD-e).